We begin with the raw amino-acid sequence, 349 residues long: Ion-translocating oxidoreductase complex subunit D (349 aa).

3 consecutive transmembrane segments (helical) span residues 20-42, 77-99, and 124-144; these read VMQRVILCLLPGLVVQCAFFGWG, SAMLTAILIGVAIPPLAPWWMIV, and AMAAYVLLLVSFPVQMTTWIA. Thr185 carries the post-translational modification FMN phosphoryl threonine. 5 consecutive transmembrane segments (helical) span residues 212-232, 239-259, 265-285, 291-311, and 315-335; these read STGVGWFWVNLAYLAGGLVLL, WHISTGVLLGLFVASSIGFLL, ASPLMHLFSGATMLAAFFIAT, ATSPRGRIIFGALIGVLVYII, and GGYPDAFAFAVLLANLCAPFI.

This sequence belongs to the NqrB/RnfD family. In terms of assembly, the complex is composed of six subunits: RnfA, RnfB, RnfC, RnfD, RnfE and RnfG. FMN is required as a cofactor.

It localises to the cell inner membrane. Functionally, part of a membrane-bound complex that couples electron transfer with translocation of ions across the membrane. This is Ion-translocating oxidoreductase complex subunit D from Shewanella baltica (strain OS185).